Here is a 458-residue protein sequence, read N- to C-terminus: Serine protease Do-like HtrB (458 aa).

Residues 1–18 (MDYRRDGQNDQHQTEPSH) show a composition bias toward basic and acidic residues. The segment at 1–42 (MDYRRDGQNDQHQTEPSHTEQQNTENQKLIGHSEQELLDAPV) is disordered. At 1 to 71 (MDYRRDGQND…TAVKKEKKRR (71 aa)) the chain is on the cytoplasmic side. Residues 72–92 (AAWLSPILGGIIGGGLMLGIA) traverse the membrane as a helical segment. Topologically, residues 93–458 (PYLPSDQNQA…LTKQTESSSS (366 aa)) are extracellular. The tract at residues 146–170 (QTSQNNTFGTGGGSSSESESGTGSG) is disordered. Residues H187, D217, and S298 each act as charge relay system in the active site. Substrate is bound by residues 296–298 (GNS) and 352–356 (LGVQM). Positions 356–440 (MIDMSQVPET…KTTIQVLRKG (85 aa)) constitute a PDZ domain.

It belongs to the peptidase S1C family.

It is found in the cell membrane. The enzyme catalyses Acts on substrates that are at least partially unfolded. The cleavage site P1 residue is normally between a pair of hydrophobic residues, such as Val-|-Val.. Functionally, degrades abnormal exported proteins and responsible for the propeptide processing of a natural pro-protein and for the maturation of a native protein. It also plays a prominent role in stress (heat shock, ethanol, puromycin and NaCl) resistance during active exponential growth. This Bacillus subtilis (strain 168) protein is Serine protease Do-like HtrB (htrB).